A 753-amino-acid polypeptide reads, in one-letter code: Bile salt-activated lipase (753 aa).

A signal peptide spans M1 to A20. Residues A21–M121 form a heparin-binding region. A disulfide bond links C84 and C100. N207 is a glycosylation site (N-linked (GlcNAc...) (complex) asparagine). Catalysis depends on S214, which acts as the Acyl-ester intermediate. A disulfide bond links C266 and C277. Catalysis depends on charge relay system residues D340 and H455. Positions Q555–F753 are disordered. T558, T569, and T579 each carry an O-linked (GalNAc...) threonine glycan. 17 repeat units span residues P559–T569, P570–A580, P581–P591, P592–P602, P603–P613, P614–P624, P625–P635, P636–P646, P647–P657, P658–P668, P669–P679, P680–P690, P691–P701, P702–A712, P713–P723, P724–A734, and P735–A745. Residues P559–A745 form a 17 X 11 AA tandem repeats, glycodomain, O-linked (mucin type) region. O-linked (GalNAc...) threonine glycans are attached at residues T607, T618, T629, T640, T651, T662, and T673. The span at P668 to P683 shows a compositional bias: pro residues.

The protein belongs to the type-B carboxylesterase/lipase family. In terms of assembly, interacts with CLC. In terms of processing, N- and O-glycosylated. In terms of tissue distribution, mammary gland and pancreas. Detected in pancreatic and duodenal juice (at protein level). Expressed by eosinophils.

The protein localises to the secreted. It catalyses the reaction a triacylglycerol + H2O = a diacylglycerol + a fatty acid + H(+). It carries out the reaction 1,2,3-tri-(9Z-octadecenoyl)-glycerol + H2O = di-(9Z)-octadecenoylglycerol + (9Z)-octadecenoate + H(+). The enzyme catalyses 1,2,3-trioctanoylglycerol + H2O = dioctanoylglycerol + octanoate + H(+). The catalysed reaction is a sterol ester + H2O = a sterol + a fatty acid + H(+). It catalyses the reaction cholesteryl (9Z-octadecenoate) + H2O = cholesterol + (9Z)-octadecenoate + H(+). It carries out the reaction an acetyl ester + H2O = an aliphatic alcohol + acetate + H(+). The enzyme catalyses a butanoate ester + H2O = an aliphatic alcohol + butanoate + H(+). The catalysed reaction is 9-hexadecanoyloxy-octadecanoate + H2O = 9-hydroxy-octadecanoate + hexadecanoate + H(+). It catalyses the reaction 9-(9Z-octadecenoyloxy)-octadecanoate + H2O = 9-hydroxy-octadecanoate + (9Z)-octadecenoate + H(+). It carries out the reaction 1-hexadecanoyl-sn-glycero-3-phosphocholine + H2O = sn-glycerol 3-phosphocholine + hexadecanoate + H(+). The enzyme catalyses 12-hexadecanoyloxy-octadecanoate + H2O = 12-hydroxyoctadecanoate + hexadecanoate + H(+). The catalysed reaction is 12-(9Z-octadecenoyloxy)-octadecanoate + H2O = 12-hydroxyoctadecanoate + (9Z)-octadecenoate + H(+). It catalyses the reaction 13-(9Z-octadecenoyloxy)-octadecanoate + H2O = 13-hydroxy-octadecanoate + (9Z)-octadecenoate + H(+). It carries out the reaction 9-(9Z-hexadecenoyloxy)-octadecanoate + H2O = (9Z)-hexadecenoate + 9-hydroxy-octadecanoate + H(+). The enzyme catalyses 12-(9Z-hexadecenoyloxy)-octadecanoate + H2O = 12-hydroxyoctadecanoate + (9Z)-hexadecenoate + H(+). The catalysed reaction is 13-(9Z-hexadecenoyloxy)-octadecanoate + H2O = 13-hydroxy-octadecanoate + (9Z)-hexadecenoate + H(+). It catalyses the reaction 12-octadecanoyloxy-octadecanoate + H2O = 12-hydroxyoctadecanoate + octadecanoate + H(+). It carries out the reaction 13-octadecanoyloxy-octadecanoate + H2O = 13-hydroxy-octadecanoate + octadecanoate + H(+). The enzyme catalyses 5-(9Z-hexadecenoyloxy)-octadecanoate + H2O = 5-hydroxy-octadecanoate + (9Z)-hexadecenoate + H(+). The catalysed reaction is 9-octadecanoyloxy-octadecanoate + H2O = 9-hydroxy-octadecanoate + octadecanoate + H(+). With respect to regulation, activated by bile salts such as sodium taurocholate. Its function is as follows. Catalyzes the hydrolysis of a wide range of substrates including cholesteryl esters, phospholipids, lysophospholipids, di- and tri-acylglycerols, and fatty acid esters of hydroxy fatty acids (FAHFAs). Preferentially hydrolyzes FAHFAs with the ester bond further away from the carboxylate. Unsaturated FAHFAs are hydrolyzed more quickly than saturated FAHFAs. Has an essential role in the complete digestion of dietary lipids and their intestinal absorption, along with the absorption of fat-soluble vitamins. The protein is Bile salt-activated lipase (CEL) of Homo sapiens (Human).